A 187-amino-acid chain; its full sequence is Threonylcarbamoyl-AMP synthase (187 aa).

The YrdC-like domain occupies 4–187 (TLTLSEAVTA…DARSGHILRL (184 aa)).

It belongs to the SUA5 family. TsaC subfamily.

It is found in the cytoplasm. The enzyme catalyses L-threonine + hydrogencarbonate + ATP = L-threonylcarbamoyladenylate + diphosphate + H2O. Required for the formation of a threonylcarbamoyl group on adenosine at position 37 (t(6)A37) in tRNAs that read codons beginning with adenine. Catalyzes the conversion of L-threonine, HCO(3)(-)/CO(2) and ATP to give threonylcarbamoyl-AMP (TC-AMP) as the acyladenylate intermediate, with the release of diphosphate. This chain is Threonylcarbamoyl-AMP synthase, found in Xylella fastidiosa (strain M12).